The chain runs to 213 residues: Kynurenine formamidase (213 aa).

Trp18 is a binding site for substrate. Positions 48, 52, and 54 each coordinate Zn(2+). The Proton donor/acceptor role is filled by His58. Zn(2+) is bound by residues His160 and Glu172.

Belongs to the Cyclase 1 superfamily. KynB family. As to quaternary structure, homodimer. The cofactor is Zn(2+).

The enzyme catalyses N-formyl-L-kynurenine + H2O = L-kynurenine + formate + H(+). It functions in the pathway amino-acid degradation; L-tryptophan degradation via kynurenine pathway; L-kynurenine from L-tryptophan: step 2/2. Catalyzes the hydrolysis of N-formyl-L-kynurenine to L-kynurenine, the second step in the kynurenine pathway of tryptophan degradation. This Burkholderia cenocepacia (strain HI2424) protein is Kynurenine formamidase.